We begin with the raw amino-acid sequence, 135 residues long: Ribonuclease P protein component 2 (135 aa).

It belongs to the eukaryotic/archaeal RNase P protein component 2 family. As to quaternary structure, consists of a catalytic RNA component and at least 4-5 protein subunits.

The protein resides in the cytoplasm. The enzyme catalyses Endonucleolytic cleavage of RNA, removing 5'-extranucleotides from tRNA precursor.. In terms of biological role, part of ribonuclease P, a protein complex that generates mature tRNA molecules by cleaving their 5'-ends. This Methanosarcina barkeri (strain Fusaro / DSM 804) protein is Ribonuclease P protein component 2.